A 661-amino-acid chain; its full sequence is Altered inheritance of mitochondria protein 3-1 (661 aa).

Disordered regions lie at residues 19 to 99 (TKTV…YSGY), 116 to 142 (AQNT…SQYN), 154 to 194 (QPAG…TFQS), 263 to 419 (LPQQ…DSSS), 431 to 473 (RNIP…SPGI), 487 to 563 (YAGH…RKDN), and 615 to 661 (EAAT…FVHS). The span at 37–58 (KDKDTHHTDHHEEDEYSEDYHT) shows a compositional bias: basic and acidic residues. Positions 120–142 (PYSSPAQQQPVSPQPPVQNSQYN) are enriched in low complexity. Residues 263–318 (LPQQQQQQQQQPEYNTQLQQNQQLHNQQAYGQQQQIYSNNTQPQYVSQTQQTSYTQ) show a composition bias toward low complexity. Composition is skewed to polar residues over residues 319-328 (NAPPQQTRSP) and 356-371 (VNQT…NEAL). Positions 390–399 (THRDRGRASV) are enriched in basic and acidic residues. The span at 406–419 (ENMQTNNSTIDSSS) shows a compositional bias: polar residues. Low complexity predominate over residues 434–447 (PAPAVGPPGAATRA). Polar residues-rich tracts occupy residues 458–473 (SQSM…SPGI), 512–533 (RSTS…PSRD), and 541–552 (RSTVSSIQSSNR).

This sequence belongs to the AIM3 family.

The protein resides in the membrane raft. The polypeptide is Altered inheritance of mitochondria protein 3-1 (AIM3-1) (Candida glabrata (strain ATCC 2001 / BCRC 20586 / JCM 3761 / NBRC 0622 / NRRL Y-65 / CBS 138) (Yeast)).